Consider the following 288-residue polypeptide: G1/S-specific cyclin-D2 (288 aa).

The Cyclin N-terminal domain occupies L26 to A151. The tract at residues Q264–L288 is disordered. S270 carries the phosphoserine modification. T279 is modified (phosphothreonine).

This sequence belongs to the cyclin family. Cyclin D subfamily. As to quaternary structure, interacts with either CDK4 or CDK6 protein kinase to form a serine/threonine kinase holoenzyme complex. The cyclin subunit imparts substrate specificity to the complex. Post-translationally, phosphorylation at Thr-279 by MAP kinases is required for ubiquitination and degradation by the DCX(AMBRA1) complex. In terms of processing, ubiquitinated by the DCX(AMBRA1) complex during the transition from G1 to S cell phase, leading to its degradation: ubiquitination is dependent on Thr-279 phosphorylation. The DCX(AMBRA1) complex represents the major regulator of CCND2 stability during the G1/S transition. Polyubiquitinated by the SCF(FBXL2) complex, leading to proteasomal degradation.

The protein resides in the nucleus. Its subcellular location is the cytoplasm. It is found in the nucleus membrane. Functionally, regulatory component of the cyclin D2-CDK4 (DC) complex that phosphorylates and inhibits members of the retinoblastoma (RB) protein family including RB1 and regulates the cell-cycle during G(1)/S transition. Phosphorylation of RB1 allows dissociation of the transcription factor E2F from the RB/E2F complex and the subsequent transcription of E2F target genes which are responsible for the progression through the G(1) phase. Hypophosphorylates RB1 in early G(1) phase. Cyclin D-CDK4 complexes are major integrators of various mitogenenic and antimitogenic signals. The protein is G1/S-specific cyclin-D2 (Ccnd2) of Rattus norvegicus (Rat).